We begin with the raw amino-acid sequence, 192 residues long: Large ribosomal subunit protein bL9 (192 aa).

The interval 172–192 (DALRPEDFFDPEADGIDEDEA) is disordered. Residues 179 to 192 (FFDPEADGIDEDEA) are compositionally biased toward acidic residues.

This sequence belongs to the bacterial ribosomal protein bL9 family.

In terms of biological role, binds to the 23S rRNA. The protein is Large ribosomal subunit protein bL9 of Rhizobium etli (strain CIAT 652).